Here is a 135-residue protein sequence, read N- to C-terminus: Class I hydrophobin 2 (135 aa).

The first 20 residues, 1-20, serve as a signal peptide directing secretion; it reads MFARLTSTLFALAAVSAVFA. Cystine bridges form between cysteine 29-cysteine 114, cysteine 36-cysteine 107, cysteine 37-cysteine 73, and cysteine 115-cysteine 128. Residues asparagine 117 and asparagine 132 are each glycosylated (N-linked (GlcNAc...) asparagine).

The protein belongs to the fungal hydrophobin family. As to quaternary structure, self-assembles to form functional amyloid fibrils called rodlets. Self-assembly into fibrillar rodlets occurs spontaneously at hydrophobic:hydrophilic interfaces and the rodlets further associate laterally to form amphipathic monolayers.

It is found in the secreted. It localises to the cell wall. Its function is as follows. Aerial growth, conidiation, and dispersal of filamentous fungi in the environment rely upon a capability of their secreting small amphipathic proteins called hydrophobins (HPBs) with low sequence identity. Class I can self-assemble into an outermost layer of rodlet bundles on aerial cell surfaces, conferring cellular hydrophobicity that supports fungal growth, development and dispersal; whereas Class II form highly ordered films at water-air interfaces through intermolecular interactions but contribute nothing to the rodlet structure. This Coprinopsis cinerea (strain Okayama-7 / 130 / ATCC MYA-4618 / FGSC 9003) (Inky cap fungus) protein is Class I hydrophobin 2.